The chain runs to 264 residues: Ribosomal protein L11 methyltransferase (264 aa).

Residues T116, G137, D159, and N200 each coordinate S-adenosyl-L-methionine.

Belongs to the methyltransferase superfamily. PrmA family.

It is found in the cytoplasm. It carries out the reaction L-lysyl-[protein] + 3 S-adenosyl-L-methionine = N(6),N(6),N(6)-trimethyl-L-lysyl-[protein] + 3 S-adenosyl-L-homocysteine + 3 H(+). Functionally, methylates ribosomal protein L11. This chain is Ribosomal protein L11 methyltransferase, found in Thermotoga neapolitana.